We begin with the raw amino-acid sequence, 679 residues long: Glycine--tRNA ligase beta subunit (679 aa).

Belongs to the class-II aminoacyl-tRNA synthetase family. Tetramer of two alpha and two beta subunits.

It localises to the cytoplasm. The enzyme catalyses tRNA(Gly) + glycine + ATP = glycyl-tRNA(Gly) + AMP + diphosphate. The chain is Glycine--tRNA ligase beta subunit from Thermodesulfovibrio yellowstonii (strain ATCC 51303 / DSM 11347 / YP87).